Here is a 34-residue protein sequence, read N- to C-terminus: Protein MgtT (34 aa).

A disordered region spans residues 1–34; sequence MNGDNPSPNRPLVTVVYKGPDFYDGEKKPPVNRR. The span at 24 to 34 shows a compositional bias: basic and acidic residues; the sequence is DGEKKPPVNRR.

In Escherichia coli (strain K12), this protein is Protein MgtT.